The chain runs to 227 residues: H-2 class II histocompatibility antigen, A-U alpha chain (227 aa).

An alpha-1 region spans residues 1-82; it reads DHVGSYGIVV…KRSNSTPATN (82 aa). Residues 1–189 lie on the Extracellular side of the membrane; sequence DHVGSYGIVV…IPAPMSELTE (189 aa). Positions 83–176 are alpha-2; the sequence is EAPQATVFPK…GLEEPVLKHW (94 aa). The Ig-like C1-type domain maps to 85–177; it reads PQATVFPKSP…LEEPVLKHWE (93 aa). A disulfide bridge connects residues cysteine 105 and cysteine 161. Asparagine 116 carries an N-linked (GlcNAc...) asparagine glycan. A connecting peptide region spans residues 177–189; sequence EPEIPAPMSELTE. The chain crosses the membrane as a helical span at residues 190-215; that stretch reads TVVCALGLSVGLVGIVVGTIFIIQGL. The Cytoplasmic portion of the chain corresponds to 216–227; that stretch reads RSGGTSRHPGPL.

This sequence belongs to the MHC class II family.

The protein localises to the membrane. In Mus musculus (Mouse), this protein is H-2 class II histocompatibility antigen, A-U alpha chain (H2-Aa).